Reading from the N-terminus, the 367-residue chain is GDSL esterase/lipase 3 (367 aa).

A signal peptide spans 1 to 23 (MVRLVLIIFFVYTIILSIGSINC). Ser-42 functions as the Nucleophile in the catalytic mechanism. Asn-175, Asn-194, and Asn-321 each carry an N-linked (GlcNAc...) asparagine glycan. Active-site residues include Asp-329 and His-332. Asn-351 is a glycosylation site (N-linked (GlcNAc...) asparagine).

This sequence belongs to the 'GDSL' lipolytic enzyme family.

It localises to the secreted. This is GDSL esterase/lipase 3 (GLIP3) from Arabidopsis thaliana (Mouse-ear cress).